A 439-amino-acid polypeptide reads, in one-letter code: Protein ABHD8 (439 aa).

2 disordered regions span residues 49–70 (AGPA…AAQG) and 124–156 (PAGS…RPKR). The segment covering 136–145 (AGSGSGSGSG) has biased composition (gly residues). A compositionally biased stretch (basic residues) spans 146 to 156 (GRRRRARRPKR). The region spanning 177 to 279 (VLFFIHGVGG…HKVIMINGGG (103 aa)) is the AB hydrolase-1 domain. Catalysis depends on charge relay system residues serine 252, aspartate 370, and histidine 398.

Belongs to the AB hydrolase superfamily. Interacts with NLRP3 (via NACHT and LLR domains); this interaction is enhanced in the presence of NLRP3 inflammasome inducers, such as ATP, nigericin, silica, or alum. Interacts with ZDHHC12. In terms of assembly, (Microbial infection) Interacts with SARS-CoV-2 nucleoprotein N; this interaction disrupts the NLRP3-ABHD8 association, enhancing NLRP3 stability, ultimately leading to increased inflammasome activation.

The protein localises to the cytoplasm. Negatively regulates NLRP3-driven inflammation. Promotes NLRP3 degradation through the chaperone-mediated autophagy (CMA) pathway, hence attenuating inflammasome activation and IL1B secretion. Acts by recruiting palmitoyltransferase ZDHHC12 to NLRP3, facilitating NLRP3 palmitoylation and subsequent degradation. This is Protein ABHD8 from Homo sapiens (Human).